The following is a 101-amino-acid chain: Small ribosomal subunit protein uS14A (101 aa).

Residues 31–73 are disordered; the sequence is IKSPSTTPEARVAAQSELNRQPRDASPVRVRNRDSVDGRPRGH. Residues 61–70 show a composition bias toward basic and acidic residues; the sequence is RNRDSVDGRP.

Belongs to the universal ribosomal protein uS14 family. As to quaternary structure, part of the 30S ribosomal subunit. Contacts proteins S3 and S10.

Binds 16S rRNA, required for the assembly of 30S particles and may also be responsible for determining the conformation of the 16S rRNA at the A site. The chain is Small ribosomal subunit protein uS14A from Mycolicibacterium vanbaalenii (strain DSM 7251 / JCM 13017 / BCRC 16820 / KCTC 9966 / NRRL B-24157 / PYR-1) (Mycobacterium vanbaalenii).